Consider the following 352-residue polypeptide: Fe(3+) ions import ATP-binding protein FbpC 1 (352 aa).

The ABC transporter domain occupies 11–241 (VELKHITKRF…PASRFMASFM (231 aa)). 43-50 (GPSGCGKT) is an ATP binding site.

It belongs to the ABC transporter superfamily. Fe(3+) ion importer (TC 3.A.1.10) family. As to quaternary structure, the complex is composed of two ATP-binding proteins (FbpC), two transmembrane proteins (FbpB) and a solute-binding protein (FbpA).

Its subcellular location is the cell inner membrane. It carries out the reaction Fe(3+)(out) + ATP + H2O = Fe(3+)(in) + ADP + phosphate + H(+). In terms of biological role, part of the ABC transporter complex FbpABC involved in Fe(3+) ions import. Responsible for energy coupling to the transport system. The polypeptide is Fe(3+) ions import ATP-binding protein FbpC 1 (Pectobacterium atrosepticum (strain SCRI 1043 / ATCC BAA-672) (Erwinia carotovora subsp. atroseptica)).